Consider the following 1247-residue polypeptide: ABC transporter B family member 14 (1247 aa).

Residues 48–337 (MFLGGLGTCI…AVPSLSAISK (290 aa)) enclose the ABC transmembrane type-1 1 domain. Helical transmembrane passes span 49–69 (FLGGLGTCIHGGTLPLFFVFF), 95–115 (LYLVYLGLVNLVSAWIGVACW), 172–192 (HVLRYLCQFIAGFVIGFLSVW), 196–216 (LLTLGVVPLIAIAGGGYAIVM), 277–297 (LGVGLTYSLLFCAWALLFWYA), and 315–335 (ILNVIYSGFALGQAVPSLSAI). 2 N-linked (GlcNAc...) asparagine glycosylation sites follow: N362 and N392. The region spanning 373–608 (IEFCGVSFAY…GGDYATLVNC (236 aa)) is the ABC transporter 1 domain. 407 to 414 (GPSGSGKS) is a binding site for ATP. The ABC transmembrane type-1 2 domain occupies 679–971 (EWLYALLGSI…TLALTPDIVK (293 aa)). A run of 2 helical transmembrane segments spans residues 680–700 (WLYALLGSIGAVLAGSQPALF) and 727–747 (AIIFVGAGIVTAPIYILQHYF). N780 carries an N-linked (GlcNAc...) asparagine glycan. 3 consecutive transmembrane segments (helical) span residues 807-824 (IVQNLSLTITALALAFFY), 830-850 (AVVTACFPLLIAASLTEQLFL), and 915-935 (LSQCLAFCSYALGLWYISVLI). N938 carries an N-linked (GlcNAc...) asparagine glycan. Residues 949–969 (FMVLLVTAYSVAETLALTPDI) traverse the membrane as a helical segment. Positions 1006–1242 (IEFRNVSFAY…SDGFYKKLTS (237 aa)) constitute an ABC transporter 2 domain. The N-linked (GlcNAc...) asparagine glycan is linked to N1010. 1041 to 1048 (GPSGSGKS) contributes to the ATP binding site. N-linked (GlcNAc...) asparagine glycosylation occurs at N1108.

The protein belongs to the ABC transporter superfamily. ABCB family. Multidrug resistance exporter (TC 3.A.1.201) subfamily.

Its subcellular location is the membrane. In Arabidopsis thaliana (Mouse-ear cress), this protein is ABC transporter B family member 14 (ABCB14).